Consider the following 346-residue polypeptide: Threonylcarbamoyl-AMP synthase (346 aa).

Residues 18–205 (DPQIAQAAAL…IPVLLRPGGI (188 aa)) enclose the YrdC-like domain. T40 provides a ligand contact to L-threonine. ATP-binding residues include R63 and N67. Residue H72 coordinates L-threonine. T123 is a binding site for ATP. Residues R127 and A147 each contribute to the L-threonine site. Positions 149 and 157 each coordinate ATP. Residue S187 participates in L-threonine binding. 2 residues coordinate ATP: R201 and Y240.

The protein belongs to the SUA5 family.

It localises to the cytoplasm. It carries out the reaction L-threonine + hydrogencarbonate + ATP = L-threonylcarbamoyladenylate + diphosphate + H2O. Required for the formation of a threonylcarbamoyl group on adenosine at position 37 (t(6)A37) in tRNAs that read codons beginning with adenine. Catalyzes the conversion of L-threonine, HCO(3)(-)/CO(2) and ATP to give threonylcarbamoyl-AMP (TC-AMP) as the acyladenylate intermediate, with the release of diphosphate. Is also able to catalyze the reverse reaction in vitro, i.e. the formation of ATP from TC-AMP and PPi. The chain is Threonylcarbamoyl-AMP synthase (ywlC) from Bacillus subtilis (strain 168).